The following is a 564-amino-acid chain: Dihydroxy-acid dehydratase (564 aa).

Cys-53 contributes to the [2Fe-2S] cluster binding site. Position 85 (Asp-85) interacts with Mg(2+). Cys-126 serves as a coordination point for [2Fe-2S] cluster. Residues Asp-127 and Lys-128 each contribute to the Mg(2+) site. The residue at position 128 (Lys-128) is an N6-carboxylysine. Residue Cys-203 participates in [2Fe-2S] cluster binding. Residue Glu-454 coordinates Mg(2+). The active-site Proton acceptor is the Ser-480.

This sequence belongs to the IlvD/Edd family. In terms of assembly, homodimer. [2Fe-2S] cluster is required as a cofactor. Mg(2+) serves as cofactor.

The catalysed reaction is (2R)-2,3-dihydroxy-3-methylbutanoate = 3-methyl-2-oxobutanoate + H2O. It catalyses the reaction (2R,3R)-2,3-dihydroxy-3-methylpentanoate = (S)-3-methyl-2-oxopentanoate + H2O. The protein operates within amino-acid biosynthesis; L-isoleucine biosynthesis; L-isoleucine from 2-oxobutanoate: step 3/4. Its pathway is amino-acid biosynthesis; L-valine biosynthesis; L-valine from pyruvate: step 3/4. Functionally, functions in the biosynthesis of branched-chain amino acids. Catalyzes the dehydration of (2R,3R)-2,3-dihydroxy-3-methylpentanoate (2,3-dihydroxy-3-methylvalerate) into 2-oxo-3-methylpentanoate (2-oxo-3-methylvalerate) and of (2R)-2,3-dihydroxy-3-methylbutanoate (2,3-dihydroxyisovalerate) into 2-oxo-3-methylbutanoate (2-oxoisovalerate), the penultimate precursor to L-isoleucine and L-valine, respectively. This Mycobacterium ulcerans (strain Agy99) protein is Dihydroxy-acid dehydratase.